Consider the following 787-residue polypeptide: PAN2-PAN3 deadenylation complex subunit pan3 (787 aa).

A disordered region spans residues 1–20; it reads MNSGLTPSPSPAVAAAGPAG. Over residues 11–20 the composition is skewed to low complexity; the sequence is PAVAAAGPAG. The segment at 23-51 adopts a C3H1-type zinc-finger fold; the sequence is GSKLKFCRYYAKDRTCFYGDECQFLHDDQ. Disordered stretches follow at residues 131–162, 179–210, and 226–291; these read EATY…AAHD, TMSQ…MSQS, and GGPT…PPST. 2 stretches are compositionally biased toward low complexity: residues 143-154 and 200-210; these read NSSSSPSLLNDS and STSRLSNMSQS. A PABPC-interacting motif-2 (PAM-2) motif is present at residues 185-200; the sequence is KTPNPTASEFIPKGGS. Over residues 265 to 290 the composition is skewed to polar residues; the sequence is TPNPANYMVPTSASTPVTNSVSQPPS. The segment at 365 to 650 is pseudokinase domain; the sequence is QIDQADMPGV…SVNDIMPMIG (286 aa). ATP-binding positions include Arg422, 471-478, and 545-546; these read DFHAGSET and TK. Residues 651 to 689 adopt a coiled-coil conformation; it reads ARFYTQLDAAQMRNDVIEEDLAKEVQNGRLFRLLAKLGT. The interval 690-787 is knob domain; that stretch reads INERPEFQKD…ELVAAANGQL (98 aa).

The protein belongs to the protein kinase superfamily. PAN3 family. As to quaternary structure, homodimer. Forms a heterotrimer with a catalytic subunit pan2 to form the poly(A)-nuclease (PAN) deadenylation complex. Interacts (via PAM-2 motif) with poly(A)-binding protein pabpc1 (via PABC domain), conferring substrate specificity of the enzyme complex. Interacts with the GW182 family proteins tnrc6a, tnrc6b and tnrc6c.

It localises to the cytoplasm. The protein resides in the P-body. Functionally, regulatory subunit of the poly(A)-nuclease (PAN) deadenylation complex, one of two cytoplasmic mRNA deadenylases involved in general and miRNA-mediated mRNA turnover. PAN specifically shortens poly(A) tails of RNA and the activity is stimulated by poly(A)-binding protein (PABP). PAN deadenylation is followed by rapid degradation of the shortened mRNA tails by the CCR4-NOT complex. Deadenylated mRNAs are then degraded by two alternative mechanisms, namely exosome-mediated 3'-5' exonucleolytic degradation, or deadenylation-dependent mRNA decaping and subsequent 5'-3' exonucleolytic degradation by XRN1. PAN3 acts as a positive regulator for PAN activity, recruiting the catalytic subunit PAN2 to mRNA via its interaction with RNA and PABP, and to miRNA targets via its interaction with GW182 family proteins. This is PAN2-PAN3 deadenylation complex subunit pan3 from Xenopus tropicalis (Western clawed frog).